The chain runs to 215 residues: Golgi-associated RAB2 interactor protein 5A (215 aa).

Disordered stretches follow at residues 1-20 (MKRG…AGPG) and 174-215 (QDYS…LWGL). Over residues 178–191 (ALEDDEDDDEDEDR) the composition is skewed to acidic residues.

This sequence belongs to the GARIN family. In terms of assembly, interacts (via N-terminus) with RAB2B (in GTP-bound form).

The protein localises to the golgi apparatus. Functionally, RAB2B effector protein which promotes cytosolic DNA-induced innate immune responses. Regulates IFN responses against DNA viruses by regulating the CGAS-STING signaling axis. This is Golgi-associated RAB2 interactor protein 5A (GARIN5A) from Bos taurus (Bovine).